Here is a 65-residue protein sequence, read N- to C-terminus: DNA-directed RNA polymerase subunit Rpo10 (65 aa).

Zn(2+)-binding residues include C7, C10, C44, and C45.

The protein belongs to the archaeal Rpo10/eukaryotic RPB10 RNA polymerase subunit family. As to quaternary structure, part of the RNA polymerase complex. It depends on Zn(2+) as a cofactor.

It is found in the cytoplasm. The protein localises to the chromosome. The enzyme catalyses RNA(n) + a ribonucleoside 5'-triphosphate = RNA(n+1) + diphosphate. In terms of biological role, DNA-dependent RNA polymerase (RNAP) catalyzes the transcription of DNA into RNA using the four ribonucleoside triphosphates as substrates. In Thermococcus kodakarensis (strain ATCC BAA-918 / JCM 12380 / KOD1) (Pyrococcus kodakaraensis (strain KOD1)), this protein is DNA-directed RNA polymerase subunit Rpo10.